The following is a 110-amino-acid chain: Large ribosomal subunit protein P1 (110 aa).

A disordered region spans residues 87–110 (PAAEEKKEEEKEESDEDMGFGLFD).

It belongs to the eukaryotic ribosomal protein P1/P2 family. P1 and P2 exist as dimers at the large ribosomal subunit. In terms of processing, phosphorylated.

Its function is as follows. Plays an important role in the elongation step of protein synthesis. The sequence is that of Large ribosomal subunit protein P1 (ALTA12) from Alternaria alternata (Alternaria rot fungus).